A 393-amino-acid polypeptide reads, in one-letter code: NAD(P)H-quinone oxidoreductase subunit H, chloroplastic (393 aa).

Belongs to the complex I 49 kDa subunit family. NDH is composed of at least 16 different subunits, 5 of which are encoded in the nucleus.

The protein localises to the plastid. It is found in the chloroplast thylakoid membrane. The catalysed reaction is a plastoquinone + NADH + (n+1) H(+)(in) = a plastoquinol + NAD(+) + n H(+)(out). It carries out the reaction a plastoquinone + NADPH + (n+1) H(+)(in) = a plastoquinol + NADP(+) + n H(+)(out). In terms of biological role, NDH shuttles electrons from NAD(P)H:plastoquinone, via FMN and iron-sulfur (Fe-S) centers, to quinones in the photosynthetic chain and possibly in a chloroplast respiratory chain. The immediate electron acceptor for the enzyme in this species is believed to be plastoquinone. Couples the redox reaction to proton translocation, and thus conserves the redox energy in a proton gradient. In Carica papaya (Papaya), this protein is NAD(P)H-quinone oxidoreductase subunit H, chloroplastic.